The following is a 99-amino-acid chain: Signal recognition particle 19 kDa protein (99 aa).

It belongs to the SRP19 family. In terms of assembly, part of the signal recognition particle protein translocation system, which is composed of SRP and FtsY. Archaeal SRP consists of a 7S RNA molecule of 300 nucleotides and two protein subunits: SRP54 and SRP19.

It is found in the cytoplasm. Involved in targeting and insertion of nascent membrane proteins into the cytoplasmic membrane. Binds directly to 7S RNA and mediates binding of the 54 kDa subunit of the SRP. The sequence is that of Signal recognition particle 19 kDa protein from Ignicoccus hospitalis (strain KIN4/I / DSM 18386 / JCM 14125).